The following is a 419-amino-acid chain: Light-independent protochlorophyllide reductase subunit N (419 aa).

[4Fe-4S] cluster-binding residues include Cys20, Cys45, and Cys102.

This sequence belongs to the BchN/ChlN family. As to quaternary structure, protochlorophyllide reductase is composed of three subunits; BchL, BchN and BchB. Forms a heterotetramer of two BchB and two BchN subunits. [4Fe-4S] cluster serves as cofactor.

The enzyme catalyses chlorophyllide a + oxidized 2[4Fe-4S]-[ferredoxin] + 2 ADP + 2 phosphate = protochlorophyllide a + reduced 2[4Fe-4S]-[ferredoxin] + 2 ATP + 2 H2O. Its pathway is porphyrin-containing compound metabolism; bacteriochlorophyll biosynthesis (light-independent). Functionally, component of the dark-operative protochlorophyllide reductase (DPOR) that uses Mg-ATP and reduced ferredoxin to reduce ring D of protochlorophyllide (Pchlide) to form chlorophyllide a (Chlide). This reaction is light-independent. The NB-protein (BchN-BchB) is the catalytic component of the complex. In Chlorobaculum tepidum (strain ATCC 49652 / DSM 12025 / NBRC 103806 / TLS) (Chlorobium tepidum), this protein is Light-independent protochlorophyllide reductase subunit N.